Here is a 95-residue protein sequence, read N- to C-terminus: MNLKPLADRVIVKPAPAEEKTKGGLFIPDTGKEKPQYGEVVAVGPGKVADNGQLLDMQVTVGKKVLYGKYSGTEVNVEGEDYLIMRESDIFAILD.

This sequence belongs to the GroES chaperonin family. In terms of assembly, heptamer of 7 subunits arranged in a ring. Interacts with the chaperonin GroEL.

It is found in the cytoplasm. Together with the chaperonin GroEL, plays an essential role in assisting protein folding. The GroEL-GroES system forms a nano-cage that allows encapsulation of the non-native substrate proteins and provides a physical environment optimized to promote and accelerate protein folding. GroES binds to the apical surface of the GroEL ring, thereby capping the opening of the GroEL channel. The sequence is that of Co-chaperonin GroES from Chlorobium limicola (strain DSM 245 / NBRC 103803 / 6330).